The sequence spans 251 residues: 2,3-bisphosphoglycerate-dependent phosphoglycerate mutase (251 aa).

Residues 8–15 (RHGESLWN), 21–22 (TG), arginine 60, 87–90 (ERHY), lysine 98, 114–115 (RR), and 183–184 (GN) contribute to the substrate site. Catalysis depends on histidine 9, which acts as the Tele-phosphohistidine intermediate. The active-site Proton donor/acceptor is glutamate 87.

It belongs to the phosphoglycerate mutase family. BPG-dependent PGAM subfamily.

The catalysed reaction is (2R)-2-phosphoglycerate = (2R)-3-phosphoglycerate. Its pathway is carbohydrate degradation; glycolysis; pyruvate from D-glyceraldehyde 3-phosphate: step 3/5. Its function is as follows. Catalyzes the interconversion of 2-phosphoglycerate and 3-phosphoglycerate. The chain is 2,3-bisphosphoglycerate-dependent phosphoglycerate mutase from Thermoanaerobacter sp. (strain X514).